The following is a 292-amino-acid chain: Ribonuclease HIII (292 aa).

Residues 76–292 form the RNase H type-2 domain; it reads TNLIGTDEVG…TQKAIKIAQL (217 aa). The a divalent metal cation site is built by D82, E83, and D186.

The protein belongs to the RNase HII family. RnhC subfamily. It depends on Mn(2+) as a cofactor. Mg(2+) serves as cofactor.

The protein localises to the cytoplasm. It catalyses the reaction Endonucleolytic cleavage to 5'-phosphomonoester.. In terms of biological role, endonuclease that specifically degrades the RNA of RNA-DNA hybrids. The protein is Ribonuclease HIII of Lactococcus lactis subsp. lactis (strain IL1403) (Streptococcus lactis).